The primary structure comprises 274 residues: Orotidine 5'-phosphate decarboxylase (274 aa).

Residue K96 is the Proton donor of the active site.

The protein belongs to the OMP decarboxylase family. Type 2 subfamily.

The enzyme catalyses orotidine 5'-phosphate + H(+) = UMP + CO2. The protein operates within pyrimidine metabolism; UMP biosynthesis via de novo pathway; UMP from orotate: step 2/2. The sequence is that of Orotidine 5'-phosphate decarboxylase from Bacteroides fragilis (strain ATCC 25285 / DSM 2151 / CCUG 4856 / JCM 11019 / LMG 10263 / NCTC 9343 / Onslow / VPI 2553 / EN-2).